The chain runs to 81 residues: Putative membrane protein insertion efficiency factor (81 aa).

The segment at 60 to 81 is disordered; sequence WNPGGYDPVPTHNTSNSSPMAE. Positions 70-81 are enriched in polar residues; that stretch reads THNTSNSSPMAE.

This sequence belongs to the UPF0161 family.

It is found in the cell inner membrane. Its function is as follows. Could be involved in insertion of integral membrane proteins into the membrane. The chain is Putative membrane protein insertion efficiency factor from Stutzerimonas stutzeri (strain A1501) (Pseudomonas stutzeri).